Consider the following 188-residue polypeptide: Glutamyl endopeptidase 2 (188 aa).

A disulfide bond links C14 and C34. Catalysis depends on charge relay system residues H33, D62, and S143. Residues C137 and C163 are joined by a disulfide bond.

It belongs to the peptidase S1 family. In terms of assembly, monomer.

It carries out the reaction Preferential cleavage: -Glu-|-Xaa- &gt;&gt; -Asp-|-Xaa-. Preference for Pro or Leu at P2 and Phe at P3. Cleavage of -Glu-|-Asp- and -Glu-|-Pro- bonds is slow.. Functionally, preferentially cleaves peptide bonds on the carboxyl-terminal side of glutamate. The sequence is that of Glutamyl endopeptidase 2 (sprE) from Streptomyces griseus.